Reading from the N-terminus, the 494-residue chain is Cytochrome P450 monooxygenase acrF (494 aa).

Position 420 (Cys-420) interacts with heme.

Belongs to the cytochrome P450 family. Heme is required as a cofactor.

It functions in the pathway secondary metabolite biosynthesis. Functionally, cytochrome P450 monooxygenase; part of the cluster that mediates the biosynthesis of acurin A, a highly reduced polyketide coupled to a serine via a peptide bond. The activities of the highly reducing polyketide synthase acrA and the nonribosomal peptide synthetase acrB are collectively responsible for the synthesis of the acurin A core structure with a heptaketide backbone produced by acrA covalently fused to a L-serine by acrB. After the formation of the PK-NRP hybrid product, it is detached from acrB by reductive release to set up the formation of the lactam ring by aldol condensation. The hydrolyase acrC then catalyzes water loss to generate a double bond in the ring. This double bond is probably reduced, which is followed by three oxidations at C-22 to generate the carboxylic acid moiety, involving probably the FAD-binding monooxygenase acrE and the cytochrome P450 monooxygenases acrD and acrF. Finally, a last methylation step performed by the O-methyltransferase acrG leads to the production of acurin A. The sequence is that of Cytochrome P450 monooxygenase acrF from Aspergillus aculeatus (strain ATCC 16872 / CBS 172.66 / WB 5094).